Here is a 35-residue protein sequence, read N- to C-terminus: UPF0387 membrane protein YohO (35 aa).

The helical transmembrane segment at 6-26 threads the bilayer; the sequence is IGVIALFLLMAIGGIGGVMLA.

It belongs to the UPF0387 family.

Its subcellular location is the cell inner membrane. This chain is UPF0387 membrane protein YohO, found in Salmonella paratyphi A (strain ATCC 9150 / SARB42).